The following is a 333-amino-acid chain: Ferrochelatase (333 aa).

Fe cation is bound by residues histidine 202 and glutamate 284.

Belongs to the ferrochelatase family.

The protein localises to the cytoplasm. It catalyses the reaction heme b + 2 H(+) = protoporphyrin IX + Fe(2+). The protein operates within porphyrin-containing compound metabolism; protoheme biosynthesis; protoheme from protoporphyrin-IX: step 1/1. Its function is as follows. Catalyzes the ferrous insertion into protoporphyrin IX. The sequence is that of Ferrochelatase from Francisella tularensis subsp. mediasiatica (strain FSC147).